The chain runs to 571 residues: Proline--tRNA ligase (571 aa).

This sequence belongs to the class-II aminoacyl-tRNA synthetase family. ProS type 1 subfamily. In terms of assembly, homodimer.

The protein resides in the cytoplasm. It carries out the reaction tRNA(Pro) + L-proline + ATP = L-prolyl-tRNA(Pro) + AMP + diphosphate. Functionally, catalyzes the attachment of proline to tRNA(Pro) in a two-step reaction: proline is first activated by ATP to form Pro-AMP and then transferred to the acceptor end of tRNA(Pro). As ProRS can inadvertently accommodate and process non-cognate amino acids such as alanine and cysteine, to avoid such errors it has two additional distinct editing activities against alanine. One activity is designated as 'pretransfer' editing and involves the tRNA(Pro)-independent hydrolysis of activated Ala-AMP. The other activity is designated 'posttransfer' editing and involves deacylation of mischarged Ala-tRNA(Pro). The misacylated Cys-tRNA(Pro) is not edited by ProRS. This is Proline--tRNA ligase from Pseudoalteromonas atlantica (strain T6c / ATCC BAA-1087).